Consider the following 143-residue polypeptide: Large ribosomal subunit protein uL11 (143 aa).

This sequence belongs to the universal ribosomal protein uL11 family. Part of the ribosomal stalk of the 50S ribosomal subunit. Interacts with L10 and the large rRNA to form the base of the stalk. L10 forms an elongated spine to which L12 dimers bind in a sequential fashion forming a multimeric L10(L12)X complex. Post-translationally, one or more lysine residues are methylated.

Forms part of the ribosomal stalk which helps the ribosome interact with GTP-bound translation factors. The protein is Large ribosomal subunit protein uL11 of Rhizobium rhizogenes (strain K84 / ATCC BAA-868) (Agrobacterium radiobacter).